Consider the following 308-residue polypeptide: ABC transporter protein AbcA (308 aa).

Positions leucine 6 to aspartate 245 constitute an ABC transporter domain. Glycine 58–serine 65 contacts ATP.

It belongs to the ABC transporter superfamily.

Influences the expression of the surface array protein gene (vapA). May have both regulatory and transport activities. The polypeptide is ABC transporter protein AbcA (abcA) (Aeromonas salmonicida).